The primary structure comprises 98 residues: Large ribosomal subunit protein bL28 (98 aa).

In terms of assembly, part of the 50S ribosomal subunit.

This Thermus thermophilus (strain ATCC 27634 / DSM 579 / HB8) protein is Large ribosomal subunit protein bL28 (rpmB).